The following is a 176-amino-acid chain: Large ribosomal subunit protein uL6 (176 aa).

This sequence belongs to the universal ribosomal protein uL6 family. Part of the 50S ribosomal subunit.

Functionally, this protein binds to the 23S rRNA, and is important in its secondary structure. It is located near the subunit interface in the base of the L7/L12 stalk, and near the tRNA binding site of the peptidyltransferase center. The chain is Large ribosomal subunit protein uL6 from Burkholderia thailandensis (strain ATCC 700388 / DSM 13276 / CCUG 48851 / CIP 106301 / E264).